The sequence spans 507 residues: ATP synthase subunit alpha, chloroplastic (507 aa).

170–177 serves as a coordination point for ATP; that stretch reads GDRQTGKT.

It belongs to the ATPase alpha/beta chains family. F-type ATPases have 2 components, CF(1) - the catalytic core - and CF(0) - the membrane proton channel. CF(1) has five subunits: alpha(3), beta(3), gamma(1), delta(1), epsilon(1). CF(0) has four main subunits: a, b, b' and c.

The protein localises to the plastid. It localises to the chloroplast thylakoid membrane. It catalyses the reaction ATP + H2O + 4 H(+)(in) = ADP + phosphate + 5 H(+)(out). Its function is as follows. Produces ATP from ADP in the presence of a proton gradient across the membrane. The alpha chain is a regulatory subunit. In Nymphaea alba (White water-lily), this protein is ATP synthase subunit alpha, chloroplastic.